The primary structure comprises 473 residues: Asparagine--tRNA ligase (473 aa).

This sequence belongs to the class-II aminoacyl-tRNA synthetase family. In terms of assembly, homodimer.

The protein localises to the cytoplasm. The catalysed reaction is tRNA(Asn) + L-asparagine + ATP = L-asparaginyl-tRNA(Asn) + AMP + diphosphate + H(+). In Treponema denticola (strain ATCC 35405 / DSM 14222 / CIP 103919 / JCM 8153 / KCTC 15104), this protein is Asparagine--tRNA ligase.